Reading from the N-terminus, the 68-residue chain is U-poneritoxin(01)-Om4b (68 aa).

Positions 1–25 are cleaved as a signal peptide; sequence MKPSGLTLAFLVVFMMAIMYNSVQA. Positions 26–39 are excised as a propeptide; the sequence is EALADADAEAFAEA.

This sequence belongs to the formicidae venom precursor-01 superfamily. As to quaternary structure, homo- or heterodimer with PLP4 (AC A0A348G5W0); disulfide-linked. Post-translationally, truncated sequences of this peptide have also been found in the venom. It is possible they have been cleaved in the venom. As to expression, expressed by the venom gland.

Its subcellular location is the secreted. Its function is as follows. This homodimer composed of two cationic amphipathic alpha-helical peptides has antimicrobial activities against E.coli, S.aureus (MIC=3.1 uM), and S.cerevisiae (MIC=3.1 uM). It also shows histamine-releasing activity (66.4% at 10 uM) and a weak hemolytic activity (10.5% at 50 uM). The sequence is that of U-poneritoxin(01)-Om4b from Odontomachus monticola (Trap-jaw ant).